Consider the following 457-residue polypeptide: Antizyme inhibitor 2 (457 aa).

Positions 115-138 are necessary for polyamine uptake stimulation; sequence QVAQIKYAAKHGVRLLSFDNEVEL.

It belongs to the Orn/Lys/Arg decarboxylase class-II family. ODC antizyme inhibitor subfamily. In terms of assembly, monomer. Interacts with OAZ1, OAZ2 and OAZ3; this interaction disrupts the interaction between the antizyme and ODC1. Does not form a heterodimer with ODC1. Post-translationally, ubiquitinated, leading to its proteasomal degradation; a process that is reduced in presence of antizymes. May also be degraded through the lysosomal degradative pathway in a proteasomal-independent manner.

It is found in the nucleus. The protein resides in the cytoplasm. The protein localises to the perinuclear region. It localises to the membrane. Its subcellular location is the cytoplasmic vesicle. It is found in the endoplasmic reticulum-Golgi intermediate compartment. The protein resides in the golgi apparatus. The protein localises to the cis-Golgi network. It localises to the trans-Golgi network. Its subcellular location is the cytoplasmic granule. It is found in the cell projection. The protein resides in the axon. The protein localises to the dendrite. It localises to the perikaryon. Functionally, antizyme inhibitor (AZI) protein that positively regulates ornithine decarboxylase (ODC) activity and polyamine uptake. AZI is an enzymatically inactive ODC homolog that counteracts the negative effect of ODC antizymes (AZs) OAZ1, OAZ2 and OAZ3 on ODC activity by competing with ODC for antizyme-binding. Inhibits antizyme-dependent ODC degradation and releases ODC monomers from their inactive complex with antizymes, leading to formation of the catalytically active ODC homodimer and restoring polyamine production. Participates in the morphological integrity of the trans-Golgi network (TGN) and functions as a regulator of intracellular secretory vesicle trafficking. The protein is Antizyme inhibitor 2 (Azin2) of Rattus norvegicus (Rat).